The chain runs to 238 residues: Ribonuclease PH (238 aa).

Residues Arg86 and 124 to 126 (GTR) contribute to the phosphate site.

It belongs to the RNase PH family. Homohexameric ring arranged as a trimer of dimers.

It carries out the reaction tRNA(n+1) + phosphate = tRNA(n) + a ribonucleoside 5'-diphosphate. Its function is as follows. Phosphorolytic 3'-5' exoribonuclease that plays an important role in tRNA 3'-end maturation. Removes nucleotide residues following the 3'-CCA terminus of tRNAs; can also add nucleotides to the ends of RNA molecules by using nucleoside diphosphates as substrates, but this may not be physiologically important. Probably plays a role in initiation of 16S rRNA degradation (leading to ribosome degradation) during starvation. The sequence is that of Ribonuclease PH from Shigella boydii serotype 18 (strain CDC 3083-94 / BS512).